The chain runs to 131 residues: Interleukin-13 (131 aa).

The first 18 residues, 1–18 (MALWVTAVLALACLGGLA), serve as a signal peptide directing secretion. N-linked (GlcNAc...) asparagine glycans are attached at residues Asn-42, Asn-53, Asn-76, and Asn-121. Disulfide bonds link Cys-52–Cys-80 and Cys-68–Cys-94.

This sequence belongs to the IL-4/IL-13 family. In terms of assembly, interacts with IL13RA2.

The protein localises to the secreted. Cytokine that plays important roles in allergic inflammation and immune response to parasite infection. Synergizes with IL2 in regulating interferon-gamma synthesis. Stimulates B-cell proliferation, and activation of eosinophils, basophils, and mast cells. Plays an important role in controlling IL33 activity by modulating the production of transmembrane and soluble forms of interleukin-1 receptor-like 1/IL1RL1. Displays the capacity to antagonize Th1-driven proinflammatory immune response and downregulates synthesis of many proinflammatory cytokines including IL1, IL6, IL10, IL12 and TNF-alpha through a mechanism that partially involves suppression of NF-kappa-B. Also functions on nonhematopoietic cells, including endothelial cells where it induces vascular cell adhesion protein 1/VCAM1, which is important in the recruitment of eosinophils. Exerts its biological effects through its receptors which comprises the IL4R chain and the IL13RA1 chain, to activate JAK1 and TYK2, leading to the activation of STAT6. Aside from IL13RA1, another receptor IL13RA2 acts as a high affinity decoy for IL13 and mediates internalization and depletion of extracellular IL13. The polypeptide is Interleukin-13 (Il13) (Rattus norvegicus (Rat)).